The following is a 262-amino-acid chain: Nurim (262 aa).

Residues 1 to 4 are Nuclear-facing; the sequence is MAPA. Residues 5–28 form a helical membrane-spanning segment; that stretch reads LLLVPAALASFILAFGTGVEFVRF. Residues 29–58 are Perinuclear space-facing; that stretch reads TSLRPLLGGIPESGGPDARQGWLAALQDQS. A helical membrane pass occupies residues 59–80; it reads ILVPLAWDLGLLLLFVGQHSLM. Topologically, residues 81 to 97 are nuclear; sequence ATETVKAWMSRYFGVLQ. Residues 98 to 114 traverse the membrane as a helical segment; that stretch reads RSLYVACTALALQLVMR. The Perinuclear space segment spans residues 115–133; the sequence is YWEPVPRGPVLWEAQAEPW. Residues 134–164 traverse the membrane as a helical segment; that stretch reads ATWVPLLCFVLHVISWLLIFSILLVFDYAEL. The Nuclear segment spans residues 165 to 191; it reads MGLKQVYYHVLGLGEPLALKSPRALRL. A helical membrane pass occupies residues 192 to 210; sequence FSHLRHPVCVELLTVLWVV. The Perinuclear space segment spans residues 211-216; the sequence is PTLGTD. A helical transmembrane segment spans residues 217-234; it reads RLLLALLLTLYLGLAHGL. Residues 235 to 262 are Nuclear-facing; it reads DQQDLRYLRAQLQRKLHLLSRPQDGEAE.

The protein belongs to the nurim family.

The protein resides in the nucleus inner membrane. The sequence is that of Nurim (NRM) from Sus scrofa (Pig).